Reading from the N-terminus, the 468-residue chain is Ribulose bisphosphate carboxylase large chain (468 aa).

N6,N6,N6-trimethyllysine is present on Lys5. Asn114 and Thr164 together coordinate substrate. Lys166 acts as the Proton acceptor in catalysis. Lys168 serves as a coordination point for substrate. Mg(2+) is bound by residues Lys192, Asp194, and Glu195. The residue at position 192 (Lys192) is an N6-carboxylysine. His285 acts as the Proton acceptor in catalysis. The substrate site is built by Arg286, His318, and Ser370.

It belongs to the RuBisCO large chain family. Type I subfamily. As to quaternary structure, heterohexadecamer of 8 large chains and 8 small chains; disulfide-linked. The disulfide link is formed within the large subunit homodimers. It depends on Mg(2+) as a cofactor. The disulfide bond which can form in the large chain dimeric partners within the hexadecamer appears to be associated with oxidative stress and protein turnover.

The protein resides in the plastid. It localises to the chloroplast. It catalyses the reaction 2 (2R)-3-phosphoglycerate + 2 H(+) = D-ribulose 1,5-bisphosphate + CO2 + H2O. The catalysed reaction is D-ribulose 1,5-bisphosphate + O2 = 2-phosphoglycolate + (2R)-3-phosphoglycerate + 2 H(+). Its function is as follows. RuBisCO catalyzes two reactions: the carboxylation of D-ribulose 1,5-bisphosphate, the primary event in carbon dioxide fixation, as well as the oxidative fragmentation of the pentose substrate in the photorespiration process. Both reactions occur simultaneously and in competition at the same active site. The protein is Ribulose bisphosphate carboxylase large chain of Anthocercis viscosa (Sticky tailflower).